Reading from the N-terminus, the 348-residue chain is Alanine racemase (348 aa).

The active-site Proton acceptor; specific for D-alanine is the lysine 34. The residue at position 34 (lysine 34) is an N6-(pyridoxal phosphate)lysine. Arginine 127 lines the substrate pocket. Catalysis depends on tyrosine 243, which acts as the Proton acceptor; specific for L-alanine. Position 291 (methionine 291) interacts with substrate.

Belongs to the alanine racemase family. It depends on pyridoxal 5'-phosphate as a cofactor.

It catalyses the reaction L-alanine = D-alanine. Its pathway is amino-acid biosynthesis; D-alanine biosynthesis; D-alanine from L-alanine: step 1/1. Catalyzes the interconversion of L-alanine and D-alanine. May also act on other amino acids. In Coprothermobacter proteolyticus (strain ATCC 35245 / DSM 5265 / OCM 4 / BT), this protein is Alanine racemase (alr).